A 185-amino-acid polypeptide reads, in one-letter code: Ribosome-recycling factor (185 aa).

The protein belongs to the RRF family.

It localises to the cytoplasm. In terms of biological role, responsible for the release of ribosomes from messenger RNA at the termination of protein biosynthesis. May increase the efficiency of translation by recycling ribosomes from one round of translation to another. In Mycobacteroides abscessus (strain ATCC 19977 / DSM 44196 / CCUG 20993 / CIP 104536 / JCM 13569 / NCTC 13031 / TMC 1543 / L948) (Mycobacterium abscessus), this protein is Ribosome-recycling factor.